We begin with the raw amino-acid sequence, 183 residues long: Peptide deformylase (183 aa).

2 residues coordinate Fe cation: C90 and H132. The active site involves E133. H136 contributes to the Fe cation binding site.

This sequence belongs to the polypeptide deformylase family. It depends on Fe(2+) as a cofactor.

It carries out the reaction N-terminal N-formyl-L-methionyl-[peptide] + H2O = N-terminal L-methionyl-[peptide] + formate. Functionally, removes the formyl group from the N-terminal Met of newly synthesized proteins. Requires at least a dipeptide for an efficient rate of reaction. N-terminal L-methionine is a prerequisite for activity but the enzyme has broad specificity at other positions. This is Peptide deformylase from Parafrankia sp. (strain EAN1pec).